The primary structure comprises 112 residues: Ribosomal processing cysteine protease Prp (112 aa).

H22 functions as the Proton donor in the catalytic mechanism. The Nucleophile role is filled by C34.

The protein belongs to the Prp family. As to quaternary structure, homodimer.

An essential cysteine protease that cleaves the N-terminus from ribosomal protein bL27. The protein is Ribosomal processing cysteine protease Prp of Bacillus subtilis (strain 168).